The chain runs to 440 residues: MQAYFEQIEKVRYEGSQSDNPFAFRHYNPDQEILGKRMADHLRFAVAYWHTFCWNGADMFGVGSFARPWQQSGDALELAKRKADIAFEFFQKLSVPYYCFHDVDIAPEGNSLKEYLHNFAVITDVLAEKQQDSGVKLLWGTANCFTHPRYGAGAATNPDPDVFAWAATQVFTAMNATKKLGGENYVLWGGREGYETLLNTDLRQEREQIGRFMQMVVEHKHKIGFQGTLLIEPKPQEPTKHQYDYDVATVYGFLKQFGLEKEIKVNVEANHATLAGHSFHHEIATAVALGVFGSVDANRGDPQLGWDTDQFPNSVEENTLIMYEILKAGGFTTGGLNFDAKVRRQSTDRYDLFHAHIGAMDTMALALKAAARMIEDDKLNQLVAKRYAGWNGELGQQILQGKASLESLAHYAESHQLAPQHQSGQQELLENLVNRHLYPK.

Positions 307 and 309 each coordinate Mg(2+).

The protein belongs to the xylose isomerase family. In terms of assembly, homotetramer. Mg(2+) serves as cofactor.

The protein localises to the cytoplasm. The catalysed reaction is alpha-D-xylose = alpha-D-xylulofuranose. The polypeptide is Xylose isomerase (Pectobacterium carotovorum subsp. carotovorum (strain PC1)).